A 468-amino-acid chain; its full sequence is Hydroxymethylglutaryl-CoA synthase B (468 aa).

Glutamate 85 (proton donor/acceptor) is an active-site residue. The Acyl-thioester intermediate role is filled by cysteine 119. The (3S)-3-hydroxy-3-methylglutaryl-CoA site is built by cysteine 119, threonine 161, serine 211, histidine 250, lysine 259, asparagine 327, and serine 359. Residue histidine 250 is the Proton donor/acceptor of the active site.

Belongs to the thiolase-like superfamily. HMG-CoA synthase family.

The catalysed reaction is acetoacetyl-CoA + acetyl-CoA + H2O = (3S)-3-hydroxy-3-methylglutaryl-CoA + CoA + H(+). The protein operates within metabolic intermediate biosynthesis; (R)-mevalonate biosynthesis; (R)-mevalonate from acetyl-CoA: step 2/3. Its function is as follows. Condenses acetyl-CoA with acetoacetyl-CoA to form HMG-CoA, which is the substrate for HMG-CoA reductase. In Dictyostelium discoideum (Social amoeba), this protein is Hydroxymethylglutaryl-CoA synthase B (hgsB).